The following is a 369-amino-acid chain: Phosphate acyltransferase (369 aa).

Belongs to the PlsX family. Homodimer. Probably interacts with PlsY.

The protein resides in the cytoplasm. The catalysed reaction is a fatty acyl-[ACP] + phosphate = an acyl phosphate + holo-[ACP]. The protein operates within lipid metabolism; phospholipid metabolism. Its function is as follows. Catalyzes the reversible formation of acyl-phosphate (acyl-PO(4)) from acyl-[acyl-carrier-protein] (acyl-ACP). This enzyme utilizes acyl-ACP as fatty acyl donor, but not acyl-CoA. In Gluconobacter oxydans (strain 621H) (Gluconobacter suboxydans), this protein is Phosphate acyltransferase.